The chain runs to 492 residues: MQIRGTDYTALTWQGDALALGFFENATEITGDLTQLDDRLEGVLRELIEEKEFKGKAGQKLVSRVGSKTPIKKLILVGLGEIEKFNSQVLGDGAAAIARLAKGEKVKTLGVSLPQREHDPAQTAAILTEGILLALHQDNRFKSDPEDKEIKLTTVELLGLGEQSTAIGKAEKIVSGVILAREMVAAPANEVTPLTFTEIATELAQTYGLELEVLGQTECEALGMGAFLGVAKASELPPQFIHLTYRPANPVKKLAIIGKSLTFDSGGLNIKGAGSGIETMKMDMGGGGATLGAAKAIAQLKPNVEIHFICAATENMISGTAMHPGDILTASNGKTIEVNNTDAEGRLTLADALVFAEKLGVEAIVDLATLTGACIVALGDDIGGLWSPNQELADELKVAADKAGEKFWQMPMESKYFEGLKSPIADMKNTGPRSGGSITAALFLQQFIKETPWAHLDIAGPVWTDKQNGVHNAGATGYPVRTLVQWVLGLAE.

Mn(2+) contacts are provided by Lys259 and Asp264. The active site involves Lys271. Residues Asp283, Asp342, and Glu344 each coordinate Mn(2+). Arg346 is a catalytic residue.

Belongs to the peptidase M17 family. Mn(2+) is required as a cofactor.

Its subcellular location is the cytoplasm. The catalysed reaction is Release of an N-terminal amino acid, Xaa-|-Yaa-, in which Xaa is preferably Leu, but may be other amino acids including Pro although not Arg or Lys, and Yaa may be Pro. Amino acid amides and methyl esters are also readily hydrolyzed, but rates on arylamides are exceedingly low.. The enzyme catalyses Release of an N-terminal amino acid, preferentially leucine, but not glutamic or aspartic acids.. Presumably involved in the processing and regular turnover of intracellular proteins. Catalyzes the removal of unsubstituted N-terminal amino acids from various peptides. The protein is Probable cytosol aminopeptidase (pepA) of Synechocystis sp. (strain ATCC 27184 / PCC 6803 / Kazusa).